The sequence spans 205 residues: Guanylate kinase (205 aa).

Residues 6-184 enclose the Guanylate kinase-like domain; it reads GLLLVVSGPS…SAKEIEGIIS (179 aa). 13-20 contacts ATP; the sequence is GPSGAGKG.

It belongs to the guanylate kinase family.

The protein localises to the cytoplasm. It carries out the reaction GMP + ATP = GDP + ADP. In terms of biological role, essential for recycling GMP and indirectly, cGMP. The sequence is that of Guanylate kinase from Clostridioides difficile (strain 630) (Peptoclostridium difficile).